Here is a 364-residue protein sequence, read N- to C-terminus: Dihydroorotate dehydrogenase (quinone) (364 aa).

FMN contacts are provided by residues 61–65 and threonine 85; that span reads AGFDK. Lysine 65 serves as a coordination point for substrate. Substrate is bound at residue 110–114; that stretch reads NRMGF. Positions 139 and 170 each coordinate FMN. Residue asparagine 170 participates in substrate binding. Serine 173 acts as the Nucleophile in catalysis. Asparagine 175 lines the substrate pocket. FMN is bound by residues lysine 214 and alanine 242. 243-244 is a binding site for substrate; the sequence is NT. FMN contacts are provided by residues glycine 266, glycine 295, and 316 to 317; that span reads YS.

This sequence belongs to the dihydroorotate dehydrogenase family. Type 2 subfamily. Monomer. FMN is required as a cofactor.

The protein localises to the cell membrane. It carries out the reaction (S)-dihydroorotate + a quinone = orotate + a quinol. The protein operates within pyrimidine metabolism; UMP biosynthesis via de novo pathway; orotate from (S)-dihydroorotate (quinone route): step 1/1. In terms of biological role, catalyzes the conversion of dihydroorotate to orotate with quinone as electron acceptor. This Rhodopseudomonas palustris (strain BisB5) protein is Dihydroorotate dehydrogenase (quinone).